Reading from the N-terminus, the 850-residue chain is Adenylate cyclase (850 aa).

A catalytic region spans residues 1-535 (MYLYIETLKQ…DISHHFPLRL (535 aa)). The segment at 541–850 (KALYSPCEIR…SLPTKQCQLH (310 aa)) is regulatory.

Belongs to the adenylyl cyclase class-1 family.

It localises to the cytoplasm. The enzyme catalyses ATP = 3',5'-cyclic AMP + diphosphate. With respect to regulation, the regulatory domain is involved in the regulation of cyclase activity by the carbon source. The sequence is that of Adenylate cyclase (cya) from Yersinia pestis.